Here is a 51-residue protein sequence, read N- to C-terminus: uncharacterized protein (51 aa).

This sequence to E.coli YdaF.

This is an uncharacterized protein from Escherichia coli O157:H7.